Consider the following 531-residue polypeptide: Tryptophan 6-halogenase ThaL (531 aa).

FAD contacts are provided by G13, T15, A16, A39, I42, I45, V47, and A50. The active site involves K79. P111 provides a ligand contact to L-tryptophan. FAD is bound by residues M198 and L349. The chloride site is built by S360 and G361. Residue I362 coordinates FAD. 4 residues coordinate L-tryptophan: Y454, Y455, E461, and F465.

This sequence belongs to the flavin-dependent halogenase family. Bacterial tryptophan halogenase subfamily. Homodimer. Monomer in solution.

The catalysed reaction is L-tryptophan + FADH2 + chloride + O2 = 6-chloro-L-tryptophan + FAD + 2 H2O. It carries out the reaction D-tryptophan + FADH2 + chloride + O2 = 6-chloro-D-tryptophan + FAD + 2 H2O. Involved in the biosynthesis of thienodolin, a plant growth-regulating compound. Catalyzes the chlorination of tryptophan (Trp) at C6 position to yield 6-chloro-tryptophan. It is also able to use bromide ions to generate monobrominated Trp. In vitro, accepts a wide range of amides and peptides carrying either L- or D-Trp at the N-terminus. The chain is Tryptophan 6-halogenase ThaL from Streptomyces albogriseolus.